A 176-amino-acid polypeptide reads, in one-letter code: Inner membrane-spanning protein YciB (176 aa).

Helical transmembrane passes span 3–23 (FLFD…WGIF), 49–69 (TMLW…LVLH), 72–92 (KFIQ…LVAA), 118–138 (KLNL…LYVV), and 149–169 (FKLF…SLWL).

It belongs to the YciB family.

The protein resides in the cell inner membrane. Its function is as follows. Plays a role in cell envelope biogenesis, maintenance of cell envelope integrity and membrane homeostasis. This chain is Inner membrane-spanning protein YciB, found in Burkholderia thailandensis (strain ATCC 700388 / DSM 13276 / CCUG 48851 / CIP 106301 / E264).